Consider the following 403-residue polypeptide: MASRSLGGLSGSRGGGKKSLSARNAAVERRNLITVCRFSVKTLIDRSCFETIDDSSPEFNNFAAVLEQILSHRLKGQVTWFGYESPRSFWDYIRVACRKVSQNCICSIENMENVSSSRAKGRAWIRVALMEKHLSEYISTALRDFKTTRRFYEEGAIVLGEEANMLAGMLLGLNAIDFSFCLKGEGLDGTFPAVIDYTPYLKFEQSSDSISSDEEELRTFGSSDSEGSTPENVGPPLILDENSWFNKCKRVRQKYQLTLEQKGYLEELLRLRENQLSESVSQNKILLQRIEDSDLAHKLEKEQLEYIIVELQDQLKSYQSLDQLSAEVSLSQASLDPGHSQEGDGKQDSLNFIGEGKEDTPSLLGLCGSLTSVASYKSLTSLKSNDCLASPTTEITSPGLTPS.

Residues M1–L20 form a disordered region. Residue R13 is modified to Omega-N-methylarginine. Residues D53 to E185 enclose the RUN domain. The tract at residues S207 to N232 is disordered. 2 positions are modified to phosphoserine: S211 and S212. Over residues F220–E231 the composition is skewed to polar residues. A coiled-coil region spans residues A296–L321.

Belongs to the RUNDC3 family. Interacts with RAP2A.

The chain is RUN domain-containing protein 3B (Rundc3b) from Rattus norvegicus (Rat).